We begin with the raw amino-acid sequence, 1224 residues long: DNA-directed RNA polymerase subunit beta'' (1224 aa).

Zn(2+)-binding residues include C233, C308, C315, and C318.

Belongs to the RNA polymerase beta' chain family. RpoC2 subfamily. In terms of assembly, in plastids the minimal PEP RNA polymerase catalytic core is composed of four subunits: alpha, beta, beta', and beta''. When a (nuclear-encoded) sigma factor is associated with the core the holoenzyme is formed, which can initiate transcription. Zn(2+) is required as a cofactor.

Its subcellular location is the plastid. The protein resides in the chloroplast. The enzyme catalyses RNA(n) + a ribonucleoside 5'-triphosphate = RNA(n+1) + diphosphate. DNA-dependent RNA polymerase catalyzes the transcription of DNA into RNA using the four ribonucleoside triphosphates as substrates. The sequence is that of DNA-directed RNA polymerase subunit beta'' from Pinus thunbergii (Japanese black pine).